The primary structure comprises 404 residues: Phospho-N-acetylmuramoyl-pentapeptide-transferase (404 aa).

10 helical membrane passes run 30–50 (SAAI…IIFF), 73–93 (IPTM…LLFA), 100–120 (IMLL…DDYI), 132–152 (GKFK…TLIF), 209–229 (YMWI…SNGA), 242–262 (TSAI…NVIF), 274–294 (LAEL…FLWY), 301–321 (IFMG…LAIV), 326–346 (LMIP…IIQV), and 381–401 (KIVT…LVTL).

It belongs to the glycosyltransferase 4 family. MraY subfamily. Mg(2+) serves as cofactor.

It localises to the cell inner membrane. It carries out the reaction UDP-N-acetyl-alpha-D-muramoyl-L-alanyl-gamma-D-glutamyl-meso-2,6-diaminopimeloyl-D-alanyl-D-alanine + di-trans,octa-cis-undecaprenyl phosphate = di-trans,octa-cis-undecaprenyl diphospho-N-acetyl-alpha-D-muramoyl-L-alanyl-D-glutamyl-meso-2,6-diaminopimeloyl-D-alanyl-D-alanine + UMP. It participates in cell wall biogenesis; peptidoglycan biosynthesis. Its function is as follows. Catalyzes the initial step of the lipid cycle reactions in the biosynthesis of the cell wall peptidoglycan: transfers peptidoglycan precursor phospho-MurNAc-pentapeptide from UDP-MurNAc-pentapeptide onto the lipid carrier undecaprenyl phosphate, yielding undecaprenyl-pyrophosphoryl-MurNAc-pentapeptide, known as lipid I. The protein is Phospho-N-acetylmuramoyl-pentapeptide-transferase of Amoebophilus asiaticus (strain 5a2).